A 417-amino-acid chain; its full sequence is Frizzy aggregation protein FrzCD (417 aa).

The span at 1–11 (MSLDTPNEKPA) shows a compositional bias: basic and acidic residues. Residues 1 to 34 (MSLDTPNEKPAGKARARKAPASKAGATNAASTSS) form a disordered region. The segment covering 21-34 (ASKAGATNAASTSS) has biased composition (low complexity). Positions 144–380 (AALRLSSSAN…QVVASMAEIE (237 aa)) constitute a Methyl-accepting transducer domain.

This sequence belongs to the methyl-accepting chemotaxis (MCP) protein family. Post-translationally, methylated. Saturated fatty acids capric acid and lauric acid stimulate methylation. Short-chain alcohols, such as isoamyl alcohol, and some other solvents cause demethylation.

The protein localises to the cytoplasm. In terms of biological role, methyl-accepting taxis protein necessary for the proper aggregation of cells to form fruiting bodies. Frz genes define a system of signal transduction analogous to the enterobacterial chemotaxis systems. The sequence is that of Frizzy aggregation protein FrzCD (frzCD) from Myxococcus xanthus.